The chain runs to 154 residues: 17 kDa A-type inclusion protein (154 aa).

Residues 17–85 (QKDCSDKLDR…YKRELERDRY (69 aa)) are a coiled coil. The tract at residues 88-154 (SRYLTSSSDP…DVEPEHPPAF (67 aa)) is disordered.

The chain is 17 kDa A-type inclusion protein from Bos taurus (Bovine).